The primary structure comprises 515 residues: Maturase K (515 aa).

This sequence belongs to the intron maturase 2 family. MatK subfamily.

The protein resides in the plastid. Its subcellular location is the chloroplast. Functionally, usually encoded in the trnK tRNA gene intron. Probably assists in splicing its own and other chloroplast group II introns. In Pinus coulteri (Coulter pine), this protein is Maturase K.